The chain runs to 208 residues: N-(5'-phosphoribosyl)anthranilate isomerase (208 aa).

Belongs to the TrpF family.

It carries out the reaction N-(5-phospho-beta-D-ribosyl)anthranilate = 1-(2-carboxyphenylamino)-1-deoxy-D-ribulose 5-phosphate. It participates in amino-acid biosynthesis; L-tryptophan biosynthesis; L-tryptophan from chorismate: step 3/5. In Neisseria gonorrhoeae (strain ATCC 700825 / FA 1090), this protein is N-(5'-phosphoribosyl)anthranilate isomerase.